The sequence spans 185 residues: Ribosome-recycling factor (185 aa).

This sequence belongs to the RRF family.

It localises to the cytoplasm. In terms of biological role, responsible for the release of ribosomes from messenger RNA at the termination of protein biosynthesis. May increase the efficiency of translation by recycling ribosomes from one round of translation to another. The protein is Ribosome-recycling factor of Geobacter metallireducens (strain ATCC 53774 / DSM 7210 / GS-15).